The chain runs to 159 residues: Phosphopantetheine adenylyltransferase (159 aa).

Substrate is bound at residue Thr-10. ATP contacts are provided by residues 10-11 and His-18; that span reads TF. Lys-42, Met-74, and Arg-88 together coordinate substrate. ATP contacts are provided by residues 89-91, Glu-99, and 124-130; these read GLR and WSFISSS.

The protein belongs to the bacterial CoaD family. As to quaternary structure, homohexamer. Mg(2+) serves as cofactor.

The protein localises to the cytoplasm. The catalysed reaction is (R)-4'-phosphopantetheine + ATP + H(+) = 3'-dephospho-CoA + diphosphate. It participates in cofactor biosynthesis; coenzyme A biosynthesis; CoA from (R)-pantothenate: step 4/5. Reversibly transfers an adenylyl group from ATP to 4'-phosphopantetheine, yielding dephospho-CoA (dPCoA) and pyrophosphate. In Salmonella choleraesuis (strain SC-B67), this protein is Phosphopantetheine adenylyltransferase.